The following is a 555-amino-acid chain: Protein FAM234A (555 aa).

Residues Met-1 to Gln-22 show a composition bias toward basic and acidic residues. The disordered stretch occupies residues Met-1–Val-40. The Cytoplasmic segment spans residues Met-1–Thr-49. Ser-21 is subject to Phosphoserine. Residues Val-50–Ile-70 form a helical; Signal-anchor for type II membrane protein membrane-spanning segment. The Extracellular portion of the chain corresponds to Pro-71 to Met-555. Residues Asn-116, Asn-120, Asn-317, Asn-392, and Asn-476 are each glycosylated (N-linked (GlcNAc...) asparagine).

It belongs to the FAM234 family.

It is found in the membrane. The protein is Protein FAM234A of Mus musculus (Mouse).